The primary structure comprises 182 residues: Adenine phosphoribosyltransferase (182 aa).

It belongs to the purine/pyrimidine phosphoribosyltransferase family. Homodimer.

It localises to the cytoplasm. The enzyme catalyses AMP + diphosphate = 5-phospho-alpha-D-ribose 1-diphosphate + adenine. The protein operates within purine metabolism; AMP biosynthesis via salvage pathway; AMP from adenine: step 1/1. In terms of biological role, catalyzes a salvage reaction resulting in the formation of AMP, that is energically less costly than de novo synthesis. The chain is Adenine phosphoribosyltransferase from Campylobacter jejuni subsp. doylei (strain ATCC BAA-1458 / RM4099 / 269.97).